A 176-amino-acid chain; its full sequence is Nucleoside triphosphate/diphosphate phosphatase (176 aa).

Arginine 23 serves as the catalytic Proton donor. Mg(2+)-binding residues include asparagine 87, aspartate 103, aspartate 105, aspartate 107, aspartate 120, and glutamate 123.

The protein belongs to the Ntdp family. Mg(2+) is required as a cofactor.

The enzyme catalyses a ribonucleoside 5'-triphosphate + H2O = a ribonucleoside 5'-diphosphate + phosphate + H(+). The catalysed reaction is a ribonucleoside 5'-diphosphate + H2O = a ribonucleoside 5'-phosphate + phosphate + H(+). In terms of biological role, has nucleoside phosphatase activity towards nucleoside triphosphates and nucleoside diphosphates. This is Nucleoside triphosphate/diphosphate phosphatase from Bacillus cereus (strain AH820).